The chain runs to 175 residues: Large ribosomal subunit protein uL10 (175 aa).

It belongs to the universal ribosomal protein uL10 family. As to quaternary structure, part of the ribosomal stalk of the 50S ribosomal subunit. The N-terminus interacts with L11 and the large rRNA to form the base of the stalk. The C-terminus forms an elongated spine to which L12 dimers bind in a sequential fashion forming a multimeric L10(L12)X complex.

Functionally, forms part of the ribosomal stalk, playing a central role in the interaction of the ribosome with GTP-bound translation factors. The chain is Large ribosomal subunit protein uL10 from Prochlorococcus marinus (strain MIT 9211).